The chain runs to 197 residues: FMN-dependent NADH:quinone oxidoreductase (197 aa).

FMN-binding positions include Ser10, 16–18 (SQS), 93–96 (MYNF), and 137–140 (TRGG).

The protein belongs to the azoreductase type 1 family. As to quaternary structure, homodimer. FMN is required as a cofactor.

It carries out the reaction 2 a quinone + NADH + H(+) = 2 a 1,4-benzosemiquinone + NAD(+). The catalysed reaction is N,N-dimethyl-1,4-phenylenediamine + anthranilate + 2 NAD(+) = 2-(4-dimethylaminophenyl)diazenylbenzoate + 2 NADH + 2 H(+). In terms of biological role, quinone reductase that provides resistance to thiol-specific stress caused by electrophilic quinones. Functionally, also exhibits azoreductase activity. Catalyzes the reductive cleavage of the azo bond in aromatic azo compounds to the corresponding amines. The protein is FMN-dependent NADH:quinone oxidoreductase of Shewanella loihica (strain ATCC BAA-1088 / PV-4).